Consider the following 132-residue polypeptide: Small ribosomal subunit protein bS6 (132 aa).

The tract at residues 94 to 132 (DAVTEESQLAKNADEKRARKATTRRPDRDDSDDNDHSED) is disordered. A compositionally biased stretch (acidic residues) spans 122-132 (DDSDDNDHSED).

Belongs to the bacterial ribosomal protein bS6 family.

Binds together with bS18 to 16S ribosomal RNA. The polypeptide is Small ribosomal subunit protein bS6 (Psychrobacter arcticus (strain DSM 17307 / VKM B-2377 / 273-4)).